Consider the following 315-residue polypeptide: Probable HTH-type transcriptional regulator SinR (315 aa).

Residues 8–65 (RGMRDWMIFIKVAEVGNLSRAARELDISISAVSKSLSRLENSIEVTLLRRDSHHLELT) enclose the HTH lysR-type domain. Residues 25–44 (LSRAARELDISISAVSKSLS) constitute a DNA-binding region (H-T-H motif).

This sequence belongs to the LysR transcriptional regulatory family.

In terms of biological role, probable regulatory protein. Its target is not known. This chain is Probable HTH-type transcriptional regulator SinR (sinR), found in Salmonella typhimurium (strain LT2 / SGSC1412 / ATCC 700720).